Consider the following 385-residue polypeptide: Chaperone protein DnaJ (385 aa).

The region spanning 5–70 is the J domain; sequence DFYEVLGVSR…QKKAAYDQYG (66 aa). The CR-type zinc finger occupies 137 to 214; it reads GVSKEIEVPT…CHGQGRKQKT (78 aa). Residues C150, C153, C167, C170, C189, C192, C202, and C205 each contribute to the Zn(2+) site. 4 CXXCXGXG motif repeats span residues 150-157, 167-174, 189-196, and 202-209; these read CDTCDGSG, CGTCHGHG, CPTCHGKG, and CNECHGQG.

It belongs to the DnaJ family. Homodimer. The cofactor is Zn(2+).

Its subcellular location is the cytoplasm. Its function is as follows. Participates actively in the response to hyperosmotic and heat shock by preventing the aggregation of stress-denatured proteins and by disaggregating proteins, also in an autonomous, DnaK-independent fashion. Unfolded proteins bind initially to DnaJ; upon interaction with the DnaJ-bound protein, DnaK hydrolyzes its bound ATP, resulting in the formation of a stable complex. GrpE releases ADP from DnaK; ATP binding to DnaK triggers the release of the substrate protein, thus completing the reaction cycle. Several rounds of ATP-dependent interactions between DnaJ, DnaK and GrpE are required for fully efficient folding. Also involved, together with DnaK and GrpE, in the DNA replication of plasmids through activation of initiation proteins. This chain is Chaperone protein DnaJ, found in Vibrio harveyi (Beneckea harveyi).